The following is a 410-amino-acid chain: Putative ribosomal large subunit pseudouridine synthase SVR1, chloroplastic (410 aa).

Residues 1–35 (MASVAASSSISFAASFLKIKAFPLSPRFFPIRTLR) constitute a chloroplast transit peptide. The tract at residues 96–143 (HNLAIDATTQNPKKKDKSKKKQPQATSSSSATTTASSPASHSEVKPKL) is disordered. Residues 107 to 117 (PKKKDKSKKKQ) show a composition bias toward basic residues. The span at 118–135 (PQATSSSSATTTASSPAS) shows a compositional bias: low complexity. The 70-residue stretch at 160–229 (QRLSKVLAAA…PKVYFALNKP (70 aa)) folds into the S4 RNA-binding domain. Asp274 functions as the Nucleophile in the catalytic mechanism.

It belongs to the pseudouridine synthase RsuA family. As to expression, highly expressed in young seedlings. Expressed in roots, rosette leaves, cauline leaves, stems and flowers.

It localises to the plastid. The protein resides in the chloroplast. Its function is as follows. Responsible for synthesis of pseudouridine in chloroplastic 23S ribosomal RNA. Necessary for normal chloroplast rRNA processing and translation. Required for normal chloroplast development and maintenance. May function in other plastids, such as root amyloplasts. The protein is Putative ribosomal large subunit pseudouridine synthase SVR1, chloroplastic (SVR1) of Arabidopsis thaliana (Mouse-ear cress).